A 534-amino-acid chain; its full sequence is Probable glycine dehydrogenase (decarboxylating) subunit 2 (534 aa).

Lys273 carries the post-translational modification N6-(pyridoxal phosphate)lysine.

Belongs to the GcvP family. C-terminal subunit subfamily. In terms of assembly, the glycine cleavage system is composed of four proteins: P, T, L and H. In this organism, the P 'protein' is a heterodimer of two subunits. It depends on pyridoxal 5'-phosphate as a cofactor.

The enzyme catalyses N(6)-[(R)-lipoyl]-L-lysyl-[glycine-cleavage complex H protein] + glycine + H(+) = N(6)-[(R)-S(8)-aminomethyldihydrolipoyl]-L-lysyl-[glycine-cleavage complex H protein] + CO2. The glycine cleavage system catalyzes the degradation of glycine. The P protein binds the alpha-amino group of glycine through its pyridoxal phosphate cofactor; CO(2) is released and the remaining methylamine moiety is then transferred to the lipoamide cofactor of the H protein. The polypeptide is Probable glycine dehydrogenase (decarboxylating) subunit 2 (Bacillus cereus (strain ATCC 14579 / DSM 31 / CCUG 7414 / JCM 2152 / NBRC 15305 / NCIMB 9373 / NCTC 2599 / NRRL B-3711)).